The primary structure comprises 775 residues: Isopimaradiene synthase (775 aa).

Residues 1–36 (MFSSSLKLKTNPLMDNKIHRSSSDRDFRGSTISSVK) constitute a chloroplast transit peptide. Residues aspartate 525, aspartate 529, asparagine 669, glutamine 672, and glutamate 677 each contribute to the Mg(2+) site. A DDXXD motif motif is present at residues 525 to 529 (DDFFD).

Belongs to the terpene synthase family. Mg(2+) serves as cofactor. As to expression, ubiquitous expression in roots, stems, leaves and flowers.

It is found in the plastid. The protein localises to the chloroplast. The catalysed reaction is (+)-copalyl diphosphate = isopimara-8(14),15-diene + diphosphate. It participates in secondary metabolite biosynthesis; terpenoid biosynthesis. Its function is as follows. Involved in the biosynthesis of ent-kaurene diterpenoids natural products such as oridonin, miltiradiene, eriocalyxin B and nezukol, known to exhibit antitumor, anti-inflammatory and antibacterial activities. Catalyzes the conversion of (+)-copalyl diphosphate ((+)-CPP) to isopimaradiene. The chain is Isopimaradiene synthase from Isodon rubescens (Rabdosia rubescens).